Reading from the N-terminus, the 141-residue chain is Protein Turandot Z (141 aa).

Positions methionine 1–alanine 23 are cleaved as a signal peptide.

The protein belongs to the Turandot family.

The protein resides in the secreted. A humoral factor that may play a role in stress tolerance. This chain is Protein Turandot Z, found in Drosophila yakuba (Fruit fly).